Consider the following 479-residue polypeptide: Transcriptional regulator ERG (479 aa).

Residues 34-47 (TASSSSDYGQTSKM) are compositionally biased toward polar residues. 2 disordered regions span residues 34 to 56 (TASSSSDYGQTSKMSPRVPQQDW) and 72 to 92 (PSQVNGSRNSPDECSVAKGGK). Residues Ser48, Ser81, and Ser96 each carry the phosphoserine modification. The region spanning 113–199 (MPPPNMTTNE…SHLHYLRETP (87 aa)) is the PNT domain. Residues 242–293 (QRITTRPDLPYEPPRRSAWTGHGHPTPQSKAAQPSPSTVPKTEDQRPQLDPY) form a disordered region. A compositionally biased stretch (polar residues) spans 267–281 (TPQSKAAQPSPSTVP). Lys282 is covalently cross-linked (Glycyl lysine isopeptide (Lys-Gly) (interchain with G-Cter in SUMO2)). Positions 311–391 (IQLWQFLLEL…HGKRYAYKFD (81 aa)) form a DNA-binding region, ETS.

This sequence belongs to the ETS family. As to quaternary structure, identified in a IGF2BP1-dependent mRNP granule complex containing untranslated mRNAs. Interacts with SETDB1.

It localises to the nucleus. Its subcellular location is the cytoplasm. Its function is as follows. Transcriptional regulator. May participate in transcriptional regulation through the recruitment of SETDB1 histone methyltransferase and subsequent modification of local chromatin structure. The polypeptide is Transcriptional regulator ERG (ERG) (Homo sapiens (Human)).